A 151-amino-acid chain; its full sequence is Ribosomal RNA large subunit methyltransferase H (151 aa).

Residues glycine 100 and 119 to 124 (LSKMTF) each bind S-adenosyl-L-methionine.

Belongs to the RNA methyltransferase RlmH family. In terms of assembly, homodimer.

The protein resides in the cytoplasm. The catalysed reaction is pseudouridine(1915) in 23S rRNA + S-adenosyl-L-methionine = N(3)-methylpseudouridine(1915) in 23S rRNA + S-adenosyl-L-homocysteine + H(+). Its function is as follows. Specifically methylates the pseudouridine at position 1915 (m3Psi1915) in 23S rRNA. The protein is Ribosomal RNA large subunit methyltransferase H of Thermotoga maritima (strain ATCC 43589 / DSM 3109 / JCM 10099 / NBRC 100826 / MSB8).